The primary structure comprises 208 residues: Large ribosomal subunit protein bL25 (208 aa).

This sequence belongs to the bacterial ribosomal protein bL25 family. CTC subfamily. As to quaternary structure, part of the 50S ribosomal subunit; part of the 5S rRNA/L5/L18/L25 subcomplex. Contacts the 5S rRNA. Binds to the 5S rRNA independently of L5 and L18.

In terms of biological role, this is one of the proteins that binds to the 5S RNA in the ribosome where it forms part of the central protuberance. In Burkholderia thailandensis (strain ATCC 700388 / DSM 13276 / CCUG 48851 / CIP 106301 / E264), this protein is Large ribosomal subunit protein bL25.